Here is a 272-residue protein sequence, read N- to C-terminus: MDKYAVIGNPVEHSLSPVIFQAFEKQTNHSFDYLKIKAPVNGFAAAVKKFHDEGGKGANITLPFKEEAYQLADKRCQEANEAHAASALQFREDGTIYAVNYDGLGLVQDLTRNHNITLTQKSILIVGAGGATRGILGPLLNAAPEKIVIVNRTPSKAHALAKIFHLRGEIQGGGFDELEPMRYDVIIHATSLGHQGKFPPLPDGLVGSQSCCYDLSYGKIASPFLQWAKDQGAKYNFDGLGMLVEHNAAVFYLWFGIYPDTNPVIEMLQAHL.

Residues 14–16 (SLS) and Thr-61 contribute to the shikimate site. Catalysis depends on Lys-65, which acts as the Proton acceptor. Position 102 (Asp-102) interacts with shikimate. Residues 127–131 (GAGGA), 151–156 (NRTPSK), and Leu-215 each bind NADP(+). Tyr-217 is a binding site for shikimate. Gly-239 is an NADP(+) binding site.

The protein belongs to the shikimate dehydrogenase family. Homodimer.

The catalysed reaction is shikimate + NADP(+) = 3-dehydroshikimate + NADPH + H(+). It functions in the pathway metabolic intermediate biosynthesis; chorismate biosynthesis; chorismate from D-erythrose 4-phosphate and phosphoenolpyruvate: step 4/7. In terms of biological role, involved in the biosynthesis of the chorismate, which leads to the biosynthesis of aromatic amino acids. Catalyzes the reversible NADPH linked reduction of 3-dehydroshikimate (DHSA) to yield shikimate (SA). The sequence is that of Shikimate dehydrogenase (NADP(+)) from Coxiella burnetii (strain CbuK_Q154) (Coxiella burnetii (strain Q154)).